A 204-amino-acid polypeptide reads, in one-letter code: Rho GDP-dissociation inhibitor 1 (204 aa).

The disordered stretch occupies residues 1-36; sequence MAEQEPTAEQLAQIAAENEEDEHSVNYKPPAQKSIQ. N-acetylalanine is present on Ala2. Ser34 is subject to Phosphoserine. The residue at position 43 (Lys43) is an N6-acetyllysine. Phosphoserine is present on Ser47. N6-acetyllysine is present on residues Lys105 and Lys127. Glycyl lysine isopeptide (Lys-Gly) (interchain with G-Cter in SUMO1); alternate cross-links involve residues Lys138 and Lys141. Glycyl lysine isopeptide (Lys-Gly) (interchain with G-Cter in SUMO2); alternate cross-links involve residues Lys138 and Lys141. Position 141 is an N6-acetyllysine; alternate (Lys141). Lys141 bears the N6-succinyllysine; alternate mark. Lys178 carries the N6-acetyllysine modification.

It belongs to the Rho GDI family. In terms of assembly, monomer. Interacts with FER. Interacts with PLXNB3. Forms a heterodimer with RAC1. Interacts with RHOA, the affinity is increased by three orders of magnitude when RHOA is prenylated. Interacts with PSMD10; the interaction increases ARHGDIA association with RHOA, leading to ARHGDIA-mediated inactivation of RHOA and ROCK and prolonged AKT activation. Interacts with KANK2; the interaction is direct and may regulate the interaction of ARHGDIA with RHOA, RAC1 and CDC42. Interacts with RHOC. Interacts with CDC42. Interacts with NGFR (via death domain); NGFR binding decreases the affinity for RHOA. As to expression, in kidney glomerulus, expressed in podocytes and mesangial cells.

The protein resides in the cytoplasm. In terms of biological role, controls Rho proteins homeostasis. Regulates the GDP/GTP exchange reaction of the Rho proteins by inhibiting the dissociation of GDP from them, and the subsequent binding of GTP to them. Retains Rho proteins such as CDC42, RAC1 and RHOA in an inactive cytosolic pool, regulating their stability and protecting them from degradation. Actively involved in the recycling and distribution of activated Rho GTPases in the cell, mediates extraction from membranes of both inactive and activated molecules due its exceptionally high affinity for prenylated forms. Through the modulation of Rho proteins, may play a role in cell motility regulation. In glioma cells, inhibits cell migration and invasion by mediating the signals of SEMA5A and PLXNB3 that lead to inactivation of RAC1. The protein is Rho GDP-dissociation inhibitor 1 (Arhgdia) of Mus musculus (Mouse).